A 127-amino-acid polypeptide reads, in one-letter code: 13 kDa ribonucleoprotein-associated protein (127 aa).

This sequence belongs to the eukaryotic ribosomal protein eL8 family. Component of the U3 snoRNP particle. Binds to the C'/D and B/C motifs in U3 snoRNA. Component of the 25S U4/U6.U5 tri-snRNP particle, a subcomplex of the spliceosome. Binds to the 5' stem-loop of U4 snRNA.

Its subcellular location is the nucleus. The protein resides in the nucleolus. Functionally, common component of the spliceosome and rRNA processing machinery. In association with the spliceosomal U4/U6.U5 tri-snRNP particle, required for splicing of pre-mRNA. In association with box C/D snoRNPs, required for processing of pre-ribosomal RNA (rRNA) and site-specific 2'-O-methylation of substrate RNAs. Essential for the accumulation and stability of U4 snRNA, U6 snRNA, and box C/D snoRNAs. This is 13 kDa ribonucleoprotein-associated protein (SNU13) from Eremothecium gossypii (strain ATCC 10895 / CBS 109.51 / FGSC 9923 / NRRL Y-1056) (Yeast).